Consider the following 1465-residue polypeptide: DNA polymerase III polC-type (1465 aa).

In terms of domain architecture, Exonuclease spans 427-583 (YVVFDVETTG…YDAEATGRLL (157 aa)).

Belongs to the DNA polymerase type-C family. PolC subfamily.

Its subcellular location is the cytoplasm. The catalysed reaction is DNA(n) + a 2'-deoxyribonucleoside 5'-triphosphate = DNA(n+1) + diphosphate. Its function is as follows. Required for replicative DNA synthesis. This DNA polymerase also exhibits 3' to 5' exonuclease activity. The chain is DNA polymerase III polC-type from Streptococcus pyogenes serotype M3 (strain ATCC BAA-595 / MGAS315).